Consider the following 282-residue polypeptide: Ribosomal RNA small subunit methyltransferase A (282 aa).

S-adenosyl-L-methionine contacts are provided by N28, L30, G55, E77, D103, and N122.

Belongs to the class I-like SAM-binding methyltransferase superfamily. rRNA adenine N(6)-methyltransferase family. RsmA subfamily.

The protein resides in the cytoplasm. The enzyme catalyses adenosine(1518)/adenosine(1519) in 16S rRNA + 4 S-adenosyl-L-methionine = N(6)-dimethyladenosine(1518)/N(6)-dimethyladenosine(1519) in 16S rRNA + 4 S-adenosyl-L-homocysteine + 4 H(+). In terms of biological role, specifically dimethylates two adjacent adenosines (A1518 and A1519) in the loop of a conserved hairpin near the 3'-end of 16S rRNA in the 30S particle. May play a critical role in biogenesis of 30S subunits. The protein is Ribosomal RNA small subunit methyltransferase A of Paracoccus denitrificans (strain Pd 1222).